A 637-amino-acid polypeptide reads, in one-letter code: Threonine--tRNA ligase (637 aa).

A TGS domain is found at 1–61 (MIKISLKNGK…NKDCKVEILT (61 aa)). Residues 242–532 (DHRKLGKELD…LIEHYAGAFP (291 aa)) are catalytic. 3 residues coordinate Zn(2+): C333, H384, and H509.

This sequence belongs to the class-II aminoacyl-tRNA synthetase family. In terms of assembly, homodimer. Requires Zn(2+) as cofactor.

Its subcellular location is the cytoplasm. The enzyme catalyses tRNA(Thr) + L-threonine + ATP = L-threonyl-tRNA(Thr) + AMP + diphosphate + H(+). Its function is as follows. Catalyzes the attachment of threonine to tRNA(Thr) in a two-step reaction: L-threonine is first activated by ATP to form Thr-AMP and then transferred to the acceptor end of tRNA(Thr). Also edits incorrectly charged L-seryl-tRNA(Thr). The chain is Threonine--tRNA ligase from Clostridium kluyveri (strain NBRC 12016).